Reading from the N-terminus, the 317-residue chain is UV DNA damage endonuclease (317 aa).

It belongs to the uve1/UvsE family.

Functionally, component in a DNA repair pathway. Removal of UV LIGHT damaged nucleotides. Recognizes pyrimidine dimers and cleave a phosphodiester bond immediately 5' to the lesion. This chain is UV DNA damage endonuclease, found in Bacillus cereus (strain Q1).